An 825-amino-acid polypeptide reads, in one-letter code: Zinc finger protein 28 (825 aa).

The interval 26-65 (RPGGGPAAGTVVAPGSPDRGRPRSRNSLASQDQQGAVTSG) is disordered. Low complexity predominate over residues 33 to 42 (AGTVVAPGSP). Positions 51–65 (NSLASQDQQGAVTSG) are enriched in polar residues. One can recognise a KRAB domain in the interval 103–174 (VTFGDVAVVF…KRKMRKGQHL (72 aa)). 14 consecutive C2H2-type zinc fingers follow at residues 377–399 (FQCN…QRIH), 405–427 (YKCN…QRCH), 433–456 (YECP…RYYH), 462–484 (FDCI…RRIH), 490–512 (YTCE…QRIH), 518–540 (YECE…QRVH), 546–568 (FKCK…WRIH), 574–596 (FECG…QRIH), 602–624 (YECK…QKTH), 630–652 (YECK…QRVH), 658–680 (YKCL…RRLH), 686–708 (YECV…RRCH), 714–736 (YECS…QRIH), and 742–764 (YECK…KRVH). Residues 770 to 792 (YNYKKGRRAFRQTAHFAHHQQIH) form a C2H2-type 15; degenerate zinc finger.

The protein belongs to the krueppel C2H2-type zinc-finger protein family. Expressed predominantly in ovary.

The protein localises to the nucleus. In terms of biological role, may be involved in transcriptional regulation. May have a role in embryonic development. This is Zinc finger protein 28 (Zfp28) from Mus musculus (Mouse).